Here is a 224-residue protein sequence, read N- to C-terminus: Deoxyribose-phosphate aldolase (224 aa).

The active-site Proton donor/acceptor is the Asp-92. The Schiff-base intermediate with acetaldehyde role is filled by Lys-155. The active-site Proton donor/acceptor is Lys-184.

This sequence belongs to the DeoC/FbaB aldolase family. DeoC type 1 subfamily.

The protein resides in the cytoplasm. It catalyses the reaction 2-deoxy-D-ribose 5-phosphate = D-glyceraldehyde 3-phosphate + acetaldehyde. Its pathway is carbohydrate degradation; 2-deoxy-D-ribose 1-phosphate degradation; D-glyceraldehyde 3-phosphate and acetaldehyde from 2-deoxy-alpha-D-ribose 1-phosphate: step 2/2. In terms of biological role, catalyzes a reversible aldol reaction between acetaldehyde and D-glyceraldehyde 3-phosphate to generate 2-deoxy-D-ribose 5-phosphate. The sequence is that of Deoxyribose-phosphate aldolase from Clostridium perfringens (strain SM101 / Type A).